The chain runs to 436 residues: Gamma-glutamyl phosphate reductase (436 aa).

It belongs to the gamma-glutamyl phosphate reductase family.

It localises to the cytoplasm. The catalysed reaction is L-glutamate 5-semialdehyde + phosphate + NADP(+) = L-glutamyl 5-phosphate + NADPH + H(+). It participates in amino-acid biosynthesis; L-proline biosynthesis; L-glutamate 5-semialdehyde from L-glutamate: step 2/2. Functionally, catalyzes the NADPH-dependent reduction of L-glutamate 5-phosphate into L-glutamate 5-semialdehyde and phosphate. The product spontaneously undergoes cyclization to form 1-pyrroline-5-carboxylate. The protein is Gamma-glutamyl phosphate reductase of Prochlorococcus marinus (strain MIT 9215).